Consider the following 497-residue polypeptide: MTKKYILALDQGTTSSRAILFNEAGEIIGIEQKEFQQIFPKPGWVEHDANEIWASVLSVIAGVLLKTNVEAKEIAAIGITNQRETAVVWEKESGRPIYNALVWQSRQTAGICERLRAEGFSEMVTEKTGLLIDPYFSGTKVRWILDHVDGAQERAERGELLFGTIDTWLIWKLSGGKAHVTDYSNASRTLLYNIYEQCWDDELLKMLNVPRAMLPDVRPSSEVYAETVSYHFFGEEIPIAGAAGDQQAALFGQACFEKGMAKNTYGTGCFMLMNTGNQGVKSKHGLLTTIAWGLDGKVEYALEGSIFVAGSAIQWLRDGLRMMKSAKESEGYATKVTSADGVYVVPAFVGLGTPYWDSDVRGAVFGLTRGTSKEHFIRATLESLAYQTKDVLQAMEADSGISLKTLRVDGGAVANNFLMQFQSDLLGVSVERPTVQETTALGAAYLAGLAVGFWTSKEEITNNWNLEQKFSAEMEETDRAKLYEGWQKAVRAAQAFK.

T13 contributes to the ADP binding site. ATP contacts are provided by T13, T14, and S15. T13 is a sn-glycerol 3-phosphate binding site. An ADP-binding site is contributed by R17. Sn-glycerol 3-phosphate contacts are provided by R83, E84, and Y135. Positions 83, 84, and 135 each coordinate glycerol. H231 is modified (phosphohistidine; by HPr). Residue D245 participates in sn-glycerol 3-phosphate binding. Positions 245 and 246 each coordinate glycerol. Positions 267 and 310 each coordinate ADP. 4 residues coordinate ATP: T267, G310, Q314, and G411. ADP contacts are provided by G411 and N415.

It belongs to the FGGY kinase family. As to quaternary structure, homotetramer and homodimer (in equilibrium). The phosphoenolpyruvate-dependent sugar phosphotransferase system (PTS), including enzyme I, and histidine-containing protein (HPr) are required for the phosphorylation, which leads to the activation of the enzyme.

It catalyses the reaction glycerol + ATP = sn-glycerol 3-phosphate + ADP + H(+). It functions in the pathway polyol metabolism; glycerol degradation via glycerol kinase pathway; sn-glycerol 3-phosphate from glycerol: step 1/1. Its activity is regulated as follows. Activated by phosphorylation and inhibited by fructose 1,6-bisphosphate (FBP). Functionally, key enzyme in the regulation of glycerol uptake and metabolism. Catalyzes the phosphorylation of glycerol to yield sn-glycerol 3-phosphate. This Halalkalibacterium halodurans (strain ATCC BAA-125 / DSM 18197 / FERM 7344 / JCM 9153 / C-125) (Bacillus halodurans) protein is Glycerol kinase.